The sequence spans 465 residues: MQSATMEFDTIAAISTPPGEGAISIVRLSGEQAVAIANKVYRSGTKDLAKVPTHTIHYGHIVDPQNDQLIDEVMLSVMRAPKTFTREDVVEINCHGGIVVVNQLLQLLLREGARMAEPGEFTKRAFLNGRMDLSQAEAVMDLIRAKTDKAMNVALNQLDGNLSTLIRSLRQEILNTLAQVEVNIDYPEYDDVEELTTKLLLEKAEFVKAQIQQLLTTAKQGKILREGLSTAIIGRPNVGKSSLLNHLLREEKAIVTDIAGTTRDVIEEYVNVRGVPLKLIDTAGIRETEDIVERIGVERSRKALADSDLILLVLNQSEELTEEDRQLLEATKGLKRVILLNKMDLPTKLDPNELQELVPAEEILSVSVLSNTGLDQLEAKIADLFFGGQTGEKDATYISNTRHIALLDQAALSLQEVINGIEAGMPVDLVQIDMTRCWDYLGEIVGDSVQDELITQLFSQFCLGK.

(6S)-5-formyl-5,6,7,8-tetrahydrofolate is bound by residues Arg27, Glu91, and Arg130. A TrmE-type G domain is found at 227–386 (GLSTAIIGRP…LEAKIADLFF (160 aa)). Asn237 is a binding site for K(+). GTP-binding positions include 237–242 (NVGKSS), 256–262 (TDIAGTT), and 281–284 (DTAG). Ser241 provides a ligand contact to Mg(2+). Residues Thr256, Ile258, and Thr261 each coordinate K(+). Thr262 is a Mg(2+) binding site. Lys465 is a binding site for (6S)-5-formyl-5,6,7,8-tetrahydrofolate.

Belongs to the TRAFAC class TrmE-Era-EngA-EngB-Septin-like GTPase superfamily. TrmE GTPase family. Homodimer. Heterotetramer of two MnmE and two MnmG subunits. Requires K(+) as cofactor.

It is found in the cytoplasm. Exhibits a very high intrinsic GTPase hydrolysis rate. Involved in the addition of a carboxymethylaminomethyl (cmnm) group at the wobble position (U34) of certain tRNAs, forming tRNA-cmnm(5)s(2)U34. In Enterococcus faecalis (strain ATCC 700802 / V583), this protein is tRNA modification GTPase MnmE.